The sequence spans 194 residues: Putative manganese efflux pump MntP (194 aa).

Helical transmembrane passes span 3–23, 40–60, 65–85, 109–129, 134–154, and 169–189; these read FYATIILALALSMDAFAVAVC, GFIFGIIEASTPIIGWALGLY, IIQWDHWVAFGLLVILGGRMI, LIATGIATSLDAMAIGVGLAF, IVHTAMTIGMMTMIMATLGML, and IIGGMVLIAIGFNILFEHLDL.

This sequence belongs to the MntP (TC 9.B.29) family.

Its subcellular location is the cell inner membrane. Functionally, probably functions as a manganese efflux pump. The polypeptide is Putative manganese efflux pump MntP (Proteus mirabilis (strain HI4320)).